A 91-amino-acid polypeptide reads, in one-letter code: Small ribosomal subunit protein uS15 (91 aa).

The protein belongs to the universal ribosomal protein uS15 family. As to quaternary structure, part of the 30S ribosomal subunit. Forms a bridge to the 50S subunit in the 70S ribosome, contacting the 23S rRNA.

One of the primary rRNA binding proteins, it binds directly to 16S rRNA where it helps nucleate assembly of the platform of the 30S subunit by binding and bridging several RNA helices of the 16S rRNA. Its function is as follows. Forms an intersubunit bridge (bridge B4) with the 23S rRNA of the 50S subunit in the ribosome. The polypeptide is Small ribosomal subunit protein uS15 (Rickettsia akari (strain Hartford)).